The chain runs to 412 residues: Regulator of microtubule dynamics protein 2 (412 aa).

Residues 9-28 (LLLGIMAGTAGISLLVLWYH) traverse the membrane as a helical segment. Ser51 bears the Phosphoserine mark. Residues 72-110 (QLQILEKLNELLTNVEELKEEIKFLKETIPKLEECIQDE) adopt a coiled-coil conformation. The residue at position 121 (Ser121) is a Phosphoserine. Residues 122–153 (PQHRARKKKTTTTTVQRPATSNSSEEAESEGG) form a disordered region. Thr141 bears the Phosphothreonine mark. A Phosphotyrosine modification is found at Tyr154. 2 positions are modified to phosphothreonine: Thr156 and Thr159.

It belongs to the RMDN family. Interacts with microtubules.

Its subcellular location is the membrane. The protein localises to the cytoplasm. It is found in the cytoskeleton. The protein resides in the spindle. It localises to the spindle pole. This is Regulator of microtubule dynamics protein 2 (Rmdn2) from Rattus norvegicus (Rat).